Consider the following 287-residue polypeptide: Small ribosomal subunit protein uS2 (287 aa).

Residues 235–287 (ESGFATGGGDWEATAPAAASGWDDAAAQPQNWDSAAQGAASWDEAAAPKEGQW) form a disordered region. Over residues 247–261 (ATAPAAASGWDDAAA) the composition is skewed to low complexity.

This sequence belongs to the universal ribosomal protein uS2 family. As to quaternary structure, component of the small ribosomal subunit. Mature ribosomes consist of a small (40S) and a large (60S) subunit. The 40S subunit contains about 33 different proteins and 1 molecule of RNA (18S). The 60S subunit contains about 49 different proteins and 3 molecules of RNA (25S, 5.8S and 5S). Interacts with RPS21.

It localises to the cytoplasm. Functionally, required for the assembly and/or stability of the 40S ribosomal subunit. Required for the processing of the 20S rRNA-precursor to mature 18S rRNA in a late step of the maturation of 40S ribosomal subunits. This Pyricularia oryzae (strain 70-15 / ATCC MYA-4617 / FGSC 8958) (Rice blast fungus) protein is Small ribosomal subunit protein uS2.